Reading from the N-terminus, the 195-residue chain is Ribosome maturation factor RimM (195 aa).

The 91-residue stretch at 101 to 191 (ADEWYPKDLI…YLTLDPPGGL (91 aa)) folds into the PRC barrel domain.

It belongs to the RimM family. In terms of assembly, binds ribosomal protein uS19.

It localises to the cytoplasm. Its function is as follows. An accessory protein needed during the final step in the assembly of 30S ribosomal subunit, possibly for assembly of the head region. Essential for efficient processing of 16S rRNA. May be needed both before and after RbfA during the maturation of 16S rRNA. It has affinity for free ribosomal 30S subunits but not for 70S ribosomes. This Bifidobacterium adolescentis (strain ATCC 15703 / DSM 20083 / NCTC 11814 / E194a) protein is Ribosome maturation factor RimM.